The sequence spans 282 residues: Bifunctional protein FolD (282 aa).

NADP(+)-binding positions include 165–167 (NRS), serine 190, and isoleucine 231.

Belongs to the tetrahydrofolate dehydrogenase/cyclohydrolase family. As to quaternary structure, homodimer.

It catalyses the reaction (6R)-5,10-methylene-5,6,7,8-tetrahydrofolate + NADP(+) = (6R)-5,10-methenyltetrahydrofolate + NADPH. The catalysed reaction is (6R)-5,10-methenyltetrahydrofolate + H2O = (6R)-10-formyltetrahydrofolate + H(+). It functions in the pathway one-carbon metabolism; tetrahydrofolate interconversion. Its function is as follows. Catalyzes the oxidation of 5,10-methylenetetrahydrofolate to 5,10-methenyltetrahydrofolate and then the hydrolysis of 5,10-methenyltetrahydrofolate to 10-formyltetrahydrofolate. The protein is Bifunctional protein FolD of Clostridium botulinum (strain Kyoto / Type A2).